Here is a 497-residue protein sequence, read N- to C-terminus: MARAIMFQGTASHVGKSVLTLALARVLYLDGFKVAPFKAQNMALNSYVTLDGGEMGRAQVAQAEACGLEPRVEMNPVLLKPSSDKGSQVIVLGKPIGHYSAKSYHLERRSMVWEAVKKAYETLAQEFDFIVIEGAGSPAEVNLKASDIANMKTAFLANAPVILVADIDRGGALASLVGTMELLEPEERKMVCGFILNKFRGDLELLKPALTFLEEKTGIPVLGVMPYIPELLIPEEDSVSLEETVSNREKDLKIGVVWYPRISNFTDFEIFQYEPDVELIYIKTLQDFRDDFDLVILPGSKNTVADLNYLKQRGLDQKLYAYVEKGKPLIGICGGLQILGEKILDPDLVEGKETEVKALGILDTVTEFRGDKITRRTSTRVTRADGYFFLQREEISGYEIHHGRTFLSGERSDVLDNTENPLVFARGRVLGTYLHGLFDNDFFRHRLLNRLRREKGLDGIENRPTSLKNLRQENYDKIARVFRENVNLKKIYEILGI.

In terms of domain architecture, GATase cobBQ-type spans 251–443; the sequence is DLKIGVVWYP…LHGLFDNDFF (193 aa). Residue cysteine 333 is the Nucleophile of the active site. The active site involves histidine 435.

It belongs to the CobB/CobQ family. CobQ subfamily.

It functions in the pathway cofactor biosynthesis; adenosylcobalamin biosynthesis. Catalyzes amidations at positions B, D, E, and G on adenosylcobyrinic A,C-diamide. NH(2) groups are provided by glutamine, and one molecule of ATP is hydrogenolyzed for each amidation. The protein is Cobyric acid synthase of Carboxydothermus hydrogenoformans (strain ATCC BAA-161 / DSM 6008 / Z-2901).